A 469-amino-acid polypeptide reads, in one-letter code: 3-isopropylmalate dehydratase large subunit (469 aa).

3 residues coordinate [4Fe-4S] cluster: Cys347, Cys410, and Cys413.

This sequence belongs to the aconitase/IPM isomerase family. LeuC type 1 subfamily. In terms of assembly, heterodimer of LeuC and LeuD. [4Fe-4S] cluster serves as cofactor.

The enzyme catalyses (2R,3S)-3-isopropylmalate = (2S)-2-isopropylmalate. It functions in the pathway amino-acid biosynthesis; L-leucine biosynthesis; L-leucine from 3-methyl-2-oxobutanoate: step 2/4. Its function is as follows. Catalyzes the isomerization between 2-isopropylmalate and 3-isopropylmalate, via the formation of 2-isopropylmaleate. The chain is 3-isopropylmalate dehydratase large subunit from Burkholderia thailandensis (strain ATCC 700388 / DSM 13276 / CCUG 48851 / CIP 106301 / E264).